We begin with the raw amino-acid sequence, 308 residues long: tRNA pseudouridine synthase B (308 aa).

The active-site Nucleophile is D45.

It belongs to the pseudouridine synthase TruB family. Type 1 subfamily.

It carries out the reaction uridine(55) in tRNA = pseudouridine(55) in tRNA. Its function is as follows. Responsible for synthesis of pseudouridine from uracil-55 in the psi GC loop of transfer RNAs. The protein is tRNA pseudouridine synthase B of Gloeothece citriformis (strain PCC 7424) (Cyanothece sp. (strain PCC 7424)).